Consider the following 235-residue polypeptide: Orotidine 5'-phosphate decarboxylase (235 aa).

Substrate contacts are provided by residues D16, K38, 65-74, T120, R181, Q190, G210, and R211; that span reads DLKLHDIGNT. K67 serves as the catalytic Proton donor.

This sequence belongs to the OMP decarboxylase family. Type 1 subfamily. Homodimer.

It catalyses the reaction orotidine 5'-phosphate + H(+) = UMP + CO2. It participates in pyrimidine metabolism; UMP biosynthesis via de novo pathway; UMP from orotate: step 2/2. Functionally, catalyzes the decarboxylation of orotidine 5'-monophosphate (OMP) to uridine 5'-monophosphate (UMP). The chain is Orotidine 5'-phosphate decarboxylase from Rhodopseudomonas palustris (strain BisA53).